Consider the following 661-residue polypeptide: UvrABC system protein B (661 aa).

Residues alanine 25 to arginine 182 form the Helicase ATP-binding domain. Glycine 38–threonine 45 provides a ligand contact to ATP. The short motif at tyrosine 91–isoleucine 114 is the Beta-hairpin element. The Helicase C-terminal domain occupies glutamine 430–isoleucine 592. The UVR domain occupies lysine 621–alanine 656.

It belongs to the UvrB family. Forms a heterotetramer with UvrA during the search for lesions. Interacts with UvrC in an incision complex.

The protein localises to the cytoplasm. The UvrABC repair system catalyzes the recognition and processing of DNA lesions. A damage recognition complex composed of 2 UvrA and 2 UvrB subunits scans DNA for abnormalities. Upon binding of the UvrA(2)B(2) complex to a putative damaged site, the DNA wraps around one UvrB monomer. DNA wrap is dependent on ATP binding by UvrB and probably causes local melting of the DNA helix, facilitating insertion of UvrB beta-hairpin between the DNA strands. Then UvrB probes one DNA strand for the presence of a lesion. If a lesion is found the UvrA subunits dissociate and the UvrB-DNA preincision complex is formed. This complex is subsequently bound by UvrC and the second UvrB is released. If no lesion is found, the DNA wraps around the other UvrB subunit that will check the other stand for damage. The sequence is that of UvrABC system protein B from Rickettsia massiliae (strain Mtu5).